The following is a 379-amino-acid chain: MSEPLDLNQLAHKIKQWGLELGFQQVGITDTDLSESEPKLQAWLDKQYHGEMDWMARHGMLRARPHELLPGTLRVISVRMNYLPANAAFASTLKNPKLGYVSRYALGRDYHKLLRNRLKKLGEMIQQHCVSLNFRPFVDSAPILERPLAEKAGLGWTGKHSLILNREAGSFFFLGELLVDIPLPVDQPVEEGCGKCVACMTICPTGAIVEPYTVDARRCISYLTIELEGAIPEELRPLMGNRIYGCDDCQLICPWNRYSQLTTEDDFSPRKPLHAPELIELFAWSEEKFLKVTEGSAIRRIGHLRWLRNIAVALGNAPWDETILAALESRKGEHPLLDEHIAWAIAQQIERRNACIVEVQLPKKQRLVRVIEKGLPRDA.

Catalysis depends on aspartate 139, which acts as the Proton donor. The 4Fe-4S ferredoxin-type domain maps to 181 to 213 (IPLPVDQPVEEGCGKCVACMTICPTGAIVEPYT). Cysteine 193, cysteine 196, cysteine 199, cysteine 203, cysteine 219, cysteine 246, cysteine 249, and cysteine 253 together coordinate [4Fe-4S] cluster.

This sequence belongs to the QueG family. Monomer. The cofactor is cob(II)alamin. Requires [4Fe-4S] cluster as cofactor.

It localises to the cytoplasm. The catalysed reaction is epoxyqueuosine(34) in tRNA + AH2 = queuosine(34) in tRNA + A + H2O. It participates in tRNA modification; tRNA-queuosine biosynthesis. Functionally, catalyzes the conversion of epoxyqueuosine (oQ) to queuosine (Q), which is a hypermodified base found in the wobble positions of tRNA(Asp), tRNA(Asn), tRNA(His) and tRNA(Tyr). This Shigella dysenteriae serotype 1 (strain Sd197) protein is Epoxyqueuosine reductase.